A 213-amino-acid chain; its full sequence is Peroxiredoxin-5, mitochondrial (213 aa).

The transit peptide at Met1–Thr51 directs the protein to the mitochondrion. In terms of domain architecture, Thioredoxin spans Ile55–Leu213. At Lys74 the chain carries N6-acetyllysine. Lys82 is modified (N6-acetyllysine; alternate). At Lys82 the chain carries N6-succinyllysine; alternate. Cys99 acts as the Cysteine sulfenic acid (-SOH) intermediate in catalysis. The S-palmitoyl cysteine moiety is linked to residue Cys99. Cys99 and Cys203 are oxidised to a cystine. N6-succinyllysine is present on Lys115. Phosphoserine is present on residues Ser170 and Ser181. The Microbody targeting signal signature appears at Ser211–Leu213.

It belongs to the peroxiredoxin family. Prx5 subfamily. In terms of assembly, monomer. Post-translationally, S-palmitoylated. Palmitoylation occurs on the active site, inhibiting its reactivity; therefore PRDX5 palmitoylation status determines its antioxidant capacity. In terms of processing, S-palmitoylated. Depalmitoylated by ABHD10.

It is found in the mitochondrion. Its subcellular location is the cytoplasm. The protein localises to the peroxisome matrix. The catalysed reaction is a hydroperoxide + [thioredoxin]-dithiol = an alcohol + [thioredoxin]-disulfide + H2O. In terms of biological role, thiol-specific peroxidase that catalyzes the reduction of hydrogen peroxide and organic hydroperoxides to water and alcohols, respectively. Plays a role in cell protection against oxidative stress by detoxifying peroxides and as sensor of hydrogen peroxide-mediated signaling events. This Rattus norvegicus (Rat) protein is Peroxiredoxin-5, mitochondrial.